A 236-amino-acid chain; its full sequence is Sensory rhodopsin II (236 aa).

7 consecutive transmembrane segments (helical) span residues 4-24 (ITTW…VLAY), 38-58 (LLLI…ALGF), 73-93 (YVDW…LAGA), 101-121 (LVVL…TPSP), 122-142 (VSYA…YLLY), 167-187 (FVVV…AGVG), and 196-216 (LVVV…ALLA). The residue at position 206 (Lys-206) is an N6-(retinylidene)lysine.

This sequence belongs to the archaeal/bacterial/fungal opsin family. Post-translationally, the covalent binding of retinal to the apoprotein, bacterioopsin, generates bacteriorhodopsin.

It is found in the membrane. Its function is as follows. Mediates the photorepellent response. The protein is Sensory rhodopsin II (sop2) of Haloarcula marismortui (strain ATCC 43049 / DSM 3752 / JCM 8966 / VKM B-1809) (Halobacterium marismortui).